The primary structure comprises 630 residues: Protein zwilch homolog (630 aa).

It belongs to the ZWILCH family. As to quaternary structure, component of the RZZ complex composed of rod-1, czw-1 and zwl-1. Interacts with the spindly-like protein spdl-1. Interacts with NDC80 complex component ndc-80.

The protein localises to the cytoplasm. The protein resides in the cell cortex. It localises to the chromosome. Its subcellular location is the centromere. It is found in the kinetochore. The protein localises to the cytoskeleton. The protein resides in the spindle. Its function is as follows. Essential component of the mitotic checkpoint, which prevents cells from prematurely exiting mitosis. Required for chromosome segregation, the assembly of the dynein-dynactin and mdf-1-mdf-2 complexes onto kinetochores and spindle pole separation. Its function related to the spindle assembly machinery and kinetochore-microtubule attachments likely depends on its association in the mitotic RZZ complex. The RZZ complex recruits the spindly-like protein spdl-1 to kinetochores. To prevent irregular chromosome segregation, the complex also inhibits the attachment of the kinetochore-associated NDC80 complex to microtubules. The recruitment of spdl-1 to kinetochores relieves this inhibition. Required for embryonic development. This chain is Protein zwilch homolog (zwl-1), found in Caenorhabditis elegans.